We begin with the raw amino-acid sequence, 153 residues long: uncharacterized protein (153 aa).

This is an uncharacterized protein from Ureaplasma parvum serovar 3 (strain ATCC 700970).